A 290-amino-acid polypeptide reads, in one-letter code: METDLAEMPEKGVLSSQDSPHFQEKSTEEGEVAALRLTARSQAAAAAAAPGSRSLRGVHVPPPLHPAPAREESARTPAAAGRAAKMAEAPASPAPLSPLEVELDPEFEPQSRPRSCTWPLQRPELQASPAKPSGETAADSMIPEEEDDEDDEDGGGRAGSAMAIGGGGGSRTLVSGLLLEDSVRVLAPGGQDPGSGPATAAGGLSGGTQALLQPQQPLPPPQPGAAGGSGQPRKCSSRRNAWGNLSYADLITRAIESSPDRRLTLSQIYEWMVSCVPYFKDKGNSNSSAG.

Disordered stretches follow at residues 1–30 (METD…TEEG) and 44–239 (AAAA…SSRR). Low complexity-rich tracts occupy residues 44-59 (AAAA…RGVH) and 75-91 (RTPA…EAPA). Phosphothreonine; by PKB/AKT1 is present on T117. Acidic residues predominate over residues 142 to 153 (IPEEEDDEDDED). Positions 242–290 (WGNLSYADLITRAIESSPDRRLTLSQIYEWMVSCVPYFKDKGNSNSSAG) form a DNA-binding region, fork-head.

The protein resides in the cytoplasm. It localises to the cytosol. In terms of biological role, transcription factor. This chain is Forkhead box protein O3B, found in Homo sapiens (Human).